The following is a 383-amino-acid chain: Hippurate hydrolase (383 aa).

The protein belongs to the peptidase M20 family.

The catalysed reaction is N-benzoylglycine + H2O = benzoate + glycine. In terms of biological role, cleaves hippuric acid into benzoic acid and glycine. The polypeptide is Hippurate hydrolase (Campylobacter jejuni subsp. jejuni serotype O:2 (strain ATCC 700819 / NCTC 11168)).